The chain runs to 330 residues: Phenylalanine--tRNA ligase alpha subunit (330 aa).

Position 255 (E255) interacts with Mg(2+).

The protein belongs to the class-II aminoacyl-tRNA synthetase family. Phe-tRNA synthetase alpha subunit type 1 subfamily. As to quaternary structure, tetramer of two alpha and two beta subunits. Mg(2+) is required as a cofactor.

The protein resides in the cytoplasm. It catalyses the reaction tRNA(Phe) + L-phenylalanine + ATP = L-phenylalanyl-tRNA(Phe) + AMP + diphosphate + H(+). The sequence is that of Phenylalanine--tRNA ligase alpha subunit from Acinetobacter baumannii (strain AYE).